The chain runs to 180 residues: Cytochrome b6-f complex subunit 4 (180 aa).

Transmembrane regions (helical) follow at residues 36-56 (LSYIFPVVILGTIACTIGLAV), 95-115 (LLGVLLMGSVPAGSLTVPFLE), and 131-151 (TVSLIGTAVALWLGIGAALPI).

The protein belongs to the cytochrome b family. PetD subfamily. The 4 large subunits of the cytochrome b6-f complex are cytochrome b6, subunit IV (17 kDa polypeptide, petD), cytochrome f and the Rieske protein, while the 4 small subunits are petG, petL, petM and petN. The complex functions as a dimer.

The protein localises to the plastid. Its subcellular location is the chloroplast thylakoid membrane. Functionally, component of the cytochrome b6-f complex, which mediates electron transfer between photosystem II (PSII) and photosystem I (PSI), cyclic electron flow around PSI, and state transitions. The chain is Cytochrome b6-f complex subunit 4 from Pinus thunbergii (Japanese black pine).